The sequence spans 469 residues: tRNA(Ile)-lysidine synthase (469 aa).

26–31 (SGGPDS) serves as a coordination point for ATP.

The protein belongs to the tRNA(Ile)-lysidine synthase family.

The protein resides in the cytoplasm. The enzyme catalyses cytidine(34) in tRNA(Ile2) + L-lysine + ATP = lysidine(34) in tRNA(Ile2) + AMP + diphosphate + H(+). In terms of biological role, ligates lysine onto the cytidine present at position 34 of the AUA codon-specific tRNA(Ile) that contains the anticodon CAU, in an ATP-dependent manner. Cytidine is converted to lysidine, thus changing the amino acid specificity of the tRNA from methionine to isoleucine. The sequence is that of tRNA(Ile)-lysidine synthase from Clostridium perfringens (strain 13 / Type A).